The sequence spans 565 residues: Hemagglutinin-neuraminidase (565 aa).

The Intravirion segment spans residues 1-20; sequence MVAEDAPVRGTCRVLFRTTT. Residues 21-41 traverse the membrane as a helical segment; it reads LIFLCTLLALSISILYESLII. The Virion surface portion of the chain corresponds to 42–565; the sequence is QKQIMSQAGS…VPFIRQVTLS (524 aa). Asn110 and Asn139 each carry an N-linked (GlcNAc...) asparagine; by host glycan. 3 disulfides stabilise this stretch: Cys161–Cys185, Cys175–Cys236, and Cys227–Cys240. Positions 223–228 are involved in neuraminidase activity; the sequence is NRKSCS. Asn267 carries N-linked (GlcNAc...) asparagine; by host glycosylation. 3 disulfides stabilise this stretch: Cys333–Cys454, Cys365–Cys375, and Cys448–Cys458. Residue Asn504 is glycosylated (N-linked (GlcNAc...) asparagine; by host). Cys528 and Cys539 form a disulfide bridge.

It belongs to the paramyxoviruses hemagglutinin-neuraminidase family. Homotetramer; composed of disulfide-linked homodimers. Interacts with F protein trimer.

It localises to the virion membrane. The protein resides in the host cell membrane. It catalyses the reaction Hydrolysis of alpha-(2-&gt;3)-, alpha-(2-&gt;6)-, alpha-(2-&gt;8)- glycosidic linkages of terminal sialic acid residues in oligosaccharides, glycoproteins, glycolipids, colominic acid and synthetic substrates.. Its function is as follows. Attaches the virus to sialic acid-containing cell receptors and thereby initiating infection. Binding of HN protein to the receptor induces a conformational change that allows the F protein to trigger virion/cell membranes fusion. In terms of biological role, neuraminidase activity ensures the efficient spread of the virus by dissociating the mature virions from the neuraminic acid containing glycoproteins. The chain is Hemagglutinin-neuraminidase (HN) from Parainfluenza virus 5 (isolate Canine/CPI-) (PIV5).